The sequence spans 327 residues: MQGSVTEFLKPRLVDIEQLSLTHAKVILEPLERGFGHTLGNALRRILLSSIPGYAVTEVEIDGILHEYSTKEGIREDIIEILLNLKELAVKVQSKDNVILTLNKSGLGPVTAANIIHDSDVQIIKPQHILCHLTEENASINMRIKVQRGRGYVPASARIHKYDRPIGRLLVDACYSPVENISYNVEAARVEQRTDLDKLILEIETNGTIDPEEAIRRAATILAEQLEAFVDLRDISQPEVKEEKPEFDPVLLRPVDDLELTVRSANCLKAEAIHYIGDLVQRTEVELLKTPNLGKKSLTEIKDVLASRGLSLGMRLENWPPLGFIDK.

The tract at residues 1–233 (MQGSVTEFLK…EQLEAFVDLR (233 aa)) is alpha N-terminal domain (alpha-NTD). An alpha C-terminal domain (alpha-CTD) region spans residues 247–327 (FDPVLLRPVD…NWPPLGFIDK (81 aa)).

Belongs to the RNA polymerase alpha chain family. In terms of assembly, homodimer. The RNAP catalytic core consists of 2 alpha, 1 beta, 1 beta' and 1 omega subunit. When a sigma factor is associated with the core the holoenzyme is formed, which can initiate transcription.

It carries out the reaction RNA(n) + a ribonucleoside 5'-triphosphate = RNA(n+1) + diphosphate. Functionally, DNA-dependent RNA polymerase catalyzes the transcription of DNA into RNA using the four ribonucleoside triphosphates as substrates. This Baumannia cicadellinicola subsp. Homalodisca coagulata protein is DNA-directed RNA polymerase subunit alpha.